A 75-amino-acid polypeptide reads, in one-letter code: Small ribosomal subunit protein bS18 (75 aa).

It belongs to the bacterial ribosomal protein bS18 family. Part of the 30S ribosomal subunit. Forms a tight heterodimer with protein bS6.

Functionally, binds as a heterodimer with protein bS6 to the central domain of the 16S rRNA, where it helps stabilize the platform of the 30S subunit. The sequence is that of Small ribosomal subunit protein bS18 from Buchnera aphidicola subsp. Baizongia pistaciae (strain Bp).